A 1571-amino-acid chain; its full sequence is Pentafunctional AROM polypeptide (1571 aa).

The tract at residues 1-380 (MTSVEKVSIL…YQLKAHQVSK (380 aa)) is 3-dehydroquinate synthase. NAD(+) contacts are provided by residues 43-45 (DTN), 81-84 (ENNK), 112-114 (GGV), and Asp117. Arg128 is a binding site for 7-phospho-2-dehydro-3-deoxy-D-arabino-heptonate. 137-138 (TS) is a binding site for NAD(+). Asp144 and Lys150 together coordinate 7-phospho-2-dehydro-3-deoxy-D-arabino-heptonate. NAD(+) is bound at residue Lys159. Position 160 (Asn160) interacts with 7-phospho-2-dehydro-3-deoxy-D-arabino-heptonate. NAD(+)-binding positions include 177–180 (FLET) and Asn188. Glu192 contacts Zn(2+). 7-phospho-2-dehydro-3-deoxy-D-arabino-heptonate contacts are provided by residues 192 to 195 (EVVK) and Lys244. Glu254 functions as the Proton acceptor; for 3-dehydroquinate synthase activity in the catalytic mechanism. 7-phospho-2-dehydro-3-deoxy-D-arabino-heptonate-binding positions include 258–262 (RNLLN) and His265. His265 is a binding site for Zn(2+). The active-site Proton acceptor; for 3-dehydroquinate synthase activity is the His269. Residues His281 and Lys352 each coordinate 7-phospho-2-dehydro-3-deoxy-D-arabino-heptonate. His281 is a binding site for Zn(2+). Residues 393–843 (VHPFDDKLIP…WDILHTKFKV (451 aa)) form an EPSP synthase region. The For EPSP synthase activity role is filled by Cys825. A shikimate kinase region spans residues 868–1058 (KRSIIVIGMR…IPKKRSFYTS (191 aa)). 875-882 (GMRGAGKS) lines the ATP pocket. The 3-dehydroquinase stretch occupies residues 1059-1271 (LTFSDLTEVA…GNEGALDVAQ (213 aa)). Lys1204 (schiff-base intermediate with substrate; for 3-dehydroquinate dehydratase activity) is an active-site residue. A shikimate dehydrogenase region spans residues 1284-1571 (EKHFWIVGNP…DVVHDAVVNQ (288 aa)).

It in the N-terminal section; belongs to the sugar phosphate cyclases superfamily. Dehydroquinate synthase family. In the 2nd section; belongs to the EPSP synthase family. This sequence in the 3rd section; belongs to the shikimate kinase family. The protein in the 4th section; belongs to the type-I 3-dehydroquinase family. It in the C-terminal section; belongs to the shikimate dehydrogenase family. As to quaternary structure, homodimer. Zn(2+) is required as a cofactor.

The protein localises to the cytoplasm. It catalyses the reaction 7-phospho-2-dehydro-3-deoxy-D-arabino-heptonate = 3-dehydroquinate + phosphate. The enzyme catalyses 3-dehydroquinate = 3-dehydroshikimate + H2O. It carries out the reaction shikimate + NADP(+) = 3-dehydroshikimate + NADPH + H(+). The catalysed reaction is shikimate + ATP = 3-phosphoshikimate + ADP + H(+). It catalyses the reaction 3-phosphoshikimate + phosphoenolpyruvate = 5-O-(1-carboxyvinyl)-3-phosphoshikimate + phosphate. It participates in metabolic intermediate biosynthesis; chorismate biosynthesis; chorismate from D-erythrose 4-phosphate and phosphoenolpyruvate: step 2/7. It functions in the pathway metabolic intermediate biosynthesis; chorismate biosynthesis; chorismate from D-erythrose 4-phosphate and phosphoenolpyruvate: step 3/7. Its pathway is metabolic intermediate biosynthesis; chorismate biosynthesis; chorismate from D-erythrose 4-phosphate and phosphoenolpyruvate: step 4/7. The protein operates within metabolic intermediate biosynthesis; chorismate biosynthesis; chorismate from D-erythrose 4-phosphate and phosphoenolpyruvate: step 5/7. It participates in metabolic intermediate biosynthesis; chorismate biosynthesis; chorismate from D-erythrose 4-phosphate and phosphoenolpyruvate: step 6/7. Its function is as follows. The AROM polypeptide catalyzes 5 consecutive enzymatic reactions in prechorismate polyaromatic amino acid biosynthesis. The sequence is that of Pentafunctional AROM polypeptide from Scheffersomyces stipitis (strain ATCC 58785 / CBS 6054 / NBRC 10063 / NRRL Y-11545) (Yeast).